The following is a 120-amino-acid chain: MSTQQDLRERRRQRLRFQLRRKGGGRPRLSVFRSGKNIYAQVIDDVAGRTLAAASSLDKALREQLKTGADSDAAVAVGKLVAERAVAAGVSLVVFDRGSYMYHGRIKALAEAAREGGLAF.

Belongs to the universal ribosomal protein uL18 family. In terms of assembly, part of the 50S ribosomal subunit; part of the 5S rRNA/L5/L18/L25 subcomplex. Contacts the 5S and 23S rRNAs.

Functionally, this is one of the proteins that bind and probably mediate the attachment of the 5S RNA into the large ribosomal subunit, where it forms part of the central protuberance. In Gluconacetobacter diazotrophicus (strain ATCC 49037 / DSM 5601 / CCUG 37298 / CIP 103539 / LMG 7603 / PAl5), this protein is Large ribosomal subunit protein uL18.